Here is a 162-residue protein sequence, read N- to C-terminus: Cyclic pyranopterin monophosphate synthase (162 aa).

Substrate-binding positions include 75 to 77 (LCH) and 113 to 114 (ME). Residue Asp-128 is part of the active site.

This sequence belongs to the MoaC family. As to quaternary structure, homohexamer; trimer of dimers.

The enzyme catalyses (8S)-3',8-cyclo-7,8-dihydroguanosine 5'-triphosphate = cyclic pyranopterin phosphate + diphosphate. The protein operates within cofactor biosynthesis; molybdopterin biosynthesis. Catalyzes the conversion of (8S)-3',8-cyclo-7,8-dihydroguanosine 5'-triphosphate to cyclic pyranopterin monophosphate (cPMP). The polypeptide is Cyclic pyranopterin monophosphate synthase (Burkholderia cenocepacia (strain ATCC BAA-245 / DSM 16553 / LMG 16656 / NCTC 13227 / J2315 / CF5610) (Burkholderia cepacia (strain J2315))).